The chain runs to 853 residues: DNA mismatch repair protein MutS (853 aa).

614–621 (GPNMGGKS) is a binding site for ATP.

This sequence belongs to the DNA mismatch repair MutS family.

In terms of biological role, this protein is involved in the repair of mismatches in DNA. It is possible that it carries out the mismatch recognition step. This protein has a weak ATPase activity. This chain is DNA mismatch repair protein MutS, found in Enterobacter sp. (strain 638).